A 167-amino-acid chain; its full sequence is Phospholipase A and acyltransferase 1 (167 aa).

At 1–138 (MAVNDCFSLT…GEGVSEQANR (138 aa)) the chain is on the cytoplasmic side. The LRAT domain maps to 20–135 (LIEVFRPCYQ…LRYGEGVSEQ (116 aa)). His30 is a catalytic residue. Cys119 (acyl-thioester intermediate) is an active-site residue. A helical transmembrane segment spans residues 139 to 159 (AIGTIGLVAAGIDIFTFLGLF). Residues 160–167 (PKRQRTKY) lie on the Lumenal side of the membrane.

The protein belongs to the H-rev107 family. As to expression, expressed in skeletal muscle, heart, brain, bone marrow and testis. In terms of tissue distribution, abundantly expressed in brain, heart, and skeletal muscle.

The protein resides in the membrane. It is found in the cytoplasm. Its subcellular location is the nucleus. The catalysed reaction is a 1,2-diacyl-sn-glycero-3-phosphocholine + H2O = a 1-acyl-sn-glycero-3-phosphocholine + a fatty acid + H(+). It carries out the reaction a 1,2-diacyl-sn-glycero-3-phosphocholine + H2O = a 2-acyl-sn-glycero-3-phosphocholine + a fatty acid + H(+). It catalyses the reaction 1,2-dihexadecanoyl-sn-glycero-3-phosphocholine + H2O = 2-hexadecanoyl-sn-glycero-3-phosphocholine + hexadecanoate + H(+). The enzyme catalyses 1,2-dihexadecanoyl-sn-glycero-3-phosphocholine + H2O = 1-hexadecanoyl-sn-glycero-3-phosphocholine + hexadecanoate + H(+). The catalysed reaction is 1-hexadecanoyl-2-(5Z,8Z,11Z,14Z-eicosatetraenoyl)-sn-glycero-3-phosphoethanolamine + H2O = 2-(5Z,8Z,11Z,14Z)-eicosatetraenoyl-sn-glycero-3-phosphoethanolamine + hexadecanoate + H(+). It carries out the reaction 1-hexadecanoyl-2-(5Z,8Z,11Z,14Z-eicosatetraenoyl)-sn-glycero-3-phosphoethanolamine + H2O = 1-hexadecanoyl-sn-glycero-3-phosphoethanolamine + (5Z,8Z,11Z,14Z)-eicosatetraenoate + H(+). It catalyses the reaction 1,2-di-(9Z-octadecenoyl)-sn-glycero-3-phosphoethanolamine + 1,2-dihexadecanoyl-sn-glycero-3-phosphocholine = hexadecanoyl-sn-glycero-3-phosphocholine + N-hexadecanoyl-1,2-di-(9Z-octadecenoyl)-sn-glycero-3-phosphoethanolamine + H(+). The enzyme catalyses 1,2-dihexadecanoyl-sn-glycero-3-phosphocholine + a 2-acyl-sn-glycero-3-phosphocholine = a 1-hexadecanoyl-2-acyl-sn-glycero-3-phosphocholine + 2-hexadecanoyl-sn-glycero-3-phosphocholine. Exhibits both phospholipase A1/2 and acyltransferase activities. Shows phospholipase A1 (PLA1) and A2 (PLA2) activity, catalyzing the calcium-independent release of fatty acids from the sn-1 or sn-2 position of glycerophospholipids. Shows O-acyltransferase activity, catalyzing the transfer of a fatty acyl group from glycerophospholipid to the hydroxyl group of lysophospholipid. Shows N-acyltransferase activity, catalyzing the calcium-independent transfer of a fatty acyl group at the sn-1 position of phosphatidylcholine (PC) and other glycerophospholipids to the primary amine of phosphatidylethanolamine (PE), forming N-acylphosphatidylethanolamine (NAPE), which serves as precursor for N-acylethanolamines (NAEs). The protein is Phospholipase A and acyltransferase 1 of Mus musculus (Mouse).